Consider the following 251-residue polypeptide: Meso-2,3-butanediol dehydrogenase (251 aa).

The NAD(+) site is built by Asn-15, Met-17, Asp-36, Asp-60, Val-61, and Asn-87. (R)-acetoin-binding residues include Ser-138, Ser-140, and Tyr-151. Ser-138 is a binding site for (S)-acetoin. Residues Tyr-151, Lys-155, Val-184, and Thr-186 each coordinate NAD(+). Position 151 (Tyr-151) interacts with (S)-acetoin. Residue Tyr-151 is the Proton acceptor of the active site.

It belongs to the short-chain dehydrogenases/reductases (SDR) family. As to quaternary structure, homotetramer; dimer of dimers.

It carries out the reaction (R,S)-butane-2,3-diol + NAD(+) = (R)-acetoin + NADH + H(+). It catalyses the reaction (S,S)-butane-2,3-diol + NAD(+) = (S)-acetoin + NADH + H(+). The catalysed reaction is (S)-acetoin + NAD(+) = diacetyl + NADH + H(+). With respect to regulation, oxidation of meso-2,3-butanediol is enhanced in the presence of Fe(2+). Reduction of diacetyl and (3S/3R)-acetoin is slightly enhanced in the presence of Mg(2+) and Mn(2+). Activity is inhibited by several metal ions, particularly Fe(3+) for reduction of diacetyl and acetoin. Functionally, catalyzes the NAD-dependent oxidation of meso-2,3-butanediol to (3R)-acetoin, and of (2S,3S)-2,3-butanediol to (3S)-acetoin, with much lower efficiency. Can also oxidize several primary alcohols such as glycerol, 1-2-pentanediol and 1,2-propanediol, with lower activity. Cannot use (2R,3R)-2,3-butanediol. In the presence of NADH, catalyzes the reduction of (3R)-acetoin to meso-2,3-butanediol, of (3S)-acetoin to (2S,3S)-2,3-butanediol and of diacetyl to (3S)-acetoin. No activity is detected with NADPH/NADP(+). The protein is Meso-2,3-butanediol dehydrogenase of Serratia marcescens.